The chain runs to 508 residues: Catalase (508 aa).

Residues H63 and N136 contribute to the active site. Residue Y346 coordinates heme.

This sequence belongs to the catalase family. As to quaternary structure, homohexamer. The cofactor is heme.

The protein resides in the cytoplasm. The catalysed reaction is 2 H2O2 = O2 + 2 H2O. In terms of biological role, decomposes hydrogen peroxide into water and oxygen; serves to protect cells from the toxic effects of hydrogen peroxide. The chain is Catalase (katA) from Haemophilus influenzae (strain ATCC 51907 / DSM 11121 / KW20 / Rd).